Reading from the N-terminus, the 204-residue chain is Lipoprotein signal peptidase (204 aa).

Residues 1-42 (MAEAERIIGTPDIPDAAGEGQERPDADPEREQQEQEQAPERT) are disordered. The span at 20–42 (GQERPDADPEREQQEQEQAPERT) shows a compositional bias: basic and acidic residues. 3 helical membrane passes run 50–70 (VLFA…MLVV), 100–120 (FGEA…VVIA), and 126–146 (LHSL…LGNL). Active-site residues include Asp-163 and Asp-177. The chain crosses the membrane as a helical span at residues 170–190 (FAVFNLADSAIVCGGILIVIL).

This sequence belongs to the peptidase A8 family.

It is found in the cell membrane. It catalyses the reaction Release of signal peptides from bacterial membrane prolipoproteins. Hydrolyzes -Xaa-Yaa-Zaa-|-(S,diacylglyceryl)Cys-, in which Xaa is hydrophobic (preferably Leu), and Yaa (Ala or Ser) and Zaa (Gly or Ala) have small, neutral side chains.. Its pathway is protein modification; lipoprotein biosynthesis (signal peptide cleavage). In terms of biological role, this protein specifically catalyzes the removal of signal peptides from prolipoproteins. The polypeptide is Lipoprotein signal peptidase (Streptomyces coelicolor (strain ATCC BAA-471 / A3(2) / M145)).